The sequence spans 443 residues: Clustered-asparagine-rich protein (443 aa).

The 91-residue stretch at 16–106 (TKLHIQNIPP…RNIDAKFAVP (91 aa)) folds into the RRM 1 domain. The interval 253–279 (NHLNNNNNNINNNNNNNNNNNNNNNVM) is disordered. The span at 256 to 277 (NNNNNNINNNNNNNNNNNNNNN) shows a compositional bias: low complexity. Positions 342-435 (SSITIMKKQN…KYLKVQLKKG (94 aa)) constitute an RRM 2 domain.

In Plasmodium falciparum, this protein is Clustered-asparagine-rich protein.